Consider the following 545-residue polypeptide: CTP synthase (545 aa).

The segment at 1-266 is amidoligase domain; sequence MTTNYIFVTG…DDYICKRFSL (266 aa). Residue Ser-14 coordinates CTP. Ser-14 provides a ligand contact to UTP. ATP contacts are provided by residues 15–20 and Asp-72; that span reads SLGKGI. Positions 72 and 140 each coordinate Mg(2+). Residues 147 to 149, 187 to 192, and Lys-223 contribute to the CTP site; these read DIE and KTKPTQ. Residues 187–192 and Lys-223 contribute to the UTP site; that span reads KTKPTQ. 239 to 241 is an ATP binding site; that stretch reads KDV. A Glutamine amidotransferase type-1 domain is found at 291-542; sequence TIGMVGKYIE…VKAASEHQKR (252 aa). Gly-352 contacts L-glutamine. Cys-379 acts as the Nucleophile; for glutamine hydrolysis in catalysis. Residues 380–383, Glu-403, and Arg-470 contribute to the L-glutamine site; that span reads LGMQ. Active-site residues include His-515 and Glu-517.

Belongs to the CTP synthase family. In terms of assembly, homotetramer.

The catalysed reaction is UTP + L-glutamine + ATP + H2O = CTP + L-glutamate + ADP + phosphate + 2 H(+). It catalyses the reaction L-glutamine + H2O = L-glutamate + NH4(+). It carries out the reaction UTP + NH4(+) + ATP = CTP + ADP + phosphate + 2 H(+). Its pathway is pyrimidine metabolism; CTP biosynthesis via de novo pathway; CTP from UDP: step 2/2. Its activity is regulated as follows. Allosterically activated by GTP, when glutamine is the substrate; GTP has no effect on the reaction when ammonia is the substrate. The allosteric effector GTP functions by stabilizing the protein conformation that binds the tetrahedral intermediate(s) formed during glutamine hydrolysis. Inhibited by the product CTP, via allosteric rather than competitive inhibition. In terms of biological role, catalyzes the ATP-dependent amination of UTP to CTP with either L-glutamine or ammonia as the source of nitrogen. Regulates intracellular CTP levels through interactions with the four ribonucleotide triphosphates. This Salmonella schwarzengrund (strain CVM19633) protein is CTP synthase.